The primary structure comprises 348 residues: Uroporphyrinogen decarboxylase (348 aa).

Residues 27 to 31, phenylalanine 46, aspartate 76, tyrosine 152, serine 207, and histidine 320 contribute to the substrate site; that span reads RQAGR.

The protein belongs to the uroporphyrinogen decarboxylase family. In terms of assembly, homodimer.

Its subcellular location is the cytoplasm. It catalyses the reaction uroporphyrinogen III + 4 H(+) = coproporphyrinogen III + 4 CO2. Its pathway is porphyrin-containing compound metabolism; protoporphyrin-IX biosynthesis; coproporphyrinogen-III from 5-aminolevulinate: step 4/4. In terms of biological role, catalyzes the decarboxylation of four acetate groups of uroporphyrinogen-III to yield coproporphyrinogen-III. This chain is Uroporphyrinogen decarboxylase, found in Bacillus mycoides (strain KBAB4) (Bacillus weihenstephanensis).